The sequence spans 238 residues: Ribonuclease PH (238 aa).

Phosphate-binding positions include Arg86 and 124-126; that span reads GTR.

Belongs to the RNase PH family. In terms of assembly, homohexameric ring arranged as a trimer of dimers.

It catalyses the reaction tRNA(n+1) + phosphate = tRNA(n) + a ribonucleoside 5'-diphosphate. Its function is as follows. Phosphorolytic 3'-5' exoribonuclease that plays an important role in tRNA 3'-end maturation. Removes nucleotide residues following the 3'-CCA terminus of tRNAs; can also add nucleotides to the ends of RNA molecules by using nucleoside diphosphates as substrates, but this may not be physiologically important. Probably plays a role in initiation of 16S rRNA degradation (leading to ribosome degradation) during starvation. In Haemophilus influenzae (strain 86-028NP), this protein is Ribonuclease PH.